The following is a 62-amino-acid chain: Sperm protamine P1 (62 aa).

A disordered region spans residues 1 to 62; sequence MARYRRHSRS…RRYSRRGRRR (62 aa).

It belongs to the protamine P1 family. In terms of tissue distribution, testis.

The protein localises to the nucleus. It localises to the chromosome. In terms of biological role, protamines substitute for histones in the chromatin of sperm during the haploid phase of spermatogenesis. They compact sperm DNA into a highly condensed, stable and inactive complex. This is Sperm protamine P1 (PRM1) from Pseudantechinus bilarni (Sandstone dibbler).